Consider the following 257-residue polypeptide: Glucosamine-6-phosphate deaminase (257 aa).

D64 functions as the Proton acceptor; for enolization step in the catalytic mechanism. Catalysis depends on N133, which acts as the For ring-opening step. H135 functions as the Proton acceptor; for ring-opening step in the catalytic mechanism. E140 acts as the For ring-opening step in catalysis.

This sequence belongs to the glucosamine/galactosamine-6-phosphate isomerase family. NagB subfamily.

It catalyses the reaction alpha-D-glucosamine 6-phosphate + H2O = beta-D-fructose 6-phosphate + NH4(+). Its pathway is amino-sugar metabolism; N-acetylneuraminate degradation; D-fructose 6-phosphate from N-acetylneuraminate: step 5/5. Its function is as follows. Catalyzes the reversible isomerization-deamination of glucosamine 6-phosphate (GlcN6P) to form fructose 6-phosphate (Fru6P) and ammonium ion. In Corynebacterium urealyticum (strain ATCC 43042 / DSM 7109), this protein is Glucosamine-6-phosphate deaminase.